A 154-amino-acid polypeptide reads, in one-letter code: 17.8 kDa class I heat shock protein (154 aa).

The sHSP domain occupies 40–154; that stretch reads ESSAFANTRI…PEVKSIEISG (115 aa).

The protein belongs to the small heat shock protein (HSP20) family. In terms of assembly, forms oligomeric structures.

It is found in the cytoplasm. The chain is 17.8 kDa class I heat shock protein from Solanum lycopersicum (Tomato).